Reading from the N-terminus, the 480-residue chain is Probable cobyric acid synthase (480 aa).

Positions 246–431 constitute a GATase cobBQ-type domain; the sequence is PVRIAVIRLP…MHGLFLNPSA (186 aa). The active-site Nucleophile is the Cys-325. The active site involves His-423.

This sequence belongs to the CobB/CobQ family. CobQ subfamily.

Its pathway is cofactor biosynthesis; adenosylcobalamin biosynthesis. Catalyzes amidations at positions B, D, E, and G on adenosylcobyrinic A,C-diamide. NH(2) groups are provided by glutamine, and one molecule of ATP is hydrogenolyzed for each amidation. This Methanoregula boonei (strain DSM 21154 / JCM 14090 / 6A8) protein is Probable cobyric acid synthase.